The sequence spans 714 residues: Polyribonucleotide nucleotidyltransferase (714 aa).

Asp488 and Asp494 together coordinate Mg(2+). The KH domain maps to 555 to 614; that stretch reads PRIEVMNIPTDKIRDVIGSGGKVIREIVEKTGAKINIEDDGTVKIASSNGKEIEAAKKWI. In terms of domain architecture, S1 motif spans 624–692; the sequence is GEIYEGTVVK…ERGKVRLSMK (69 aa).

It belongs to the polyribonucleotide nucleotidyltransferase family. Mg(2+) serves as cofactor.

The protein localises to the cytoplasm. It catalyses the reaction RNA(n+1) + phosphate = RNA(n) + a ribonucleoside 5'-diphosphate. Its function is as follows. Involved in mRNA degradation. Catalyzes the phosphorolysis of single-stranded polyribonucleotides processively in the 3'- to 5'-direction. The sequence is that of Polyribonucleotide nucleotidyltransferase from Brucella abortus biovar 1 (strain 9-941).